The chain runs to 92 residues: DNA-binding protein HU (92 aa).

The protein belongs to the bacterial histone-like protein family. As to quaternary structure, homodimer.

Histone-like DNA-binding protein which is capable of wrapping DNA to stabilize it, and thus to prevent its denaturation under extreme environmental conditions. The polypeptide is DNA-binding protein HU (hup) (Buchnera aphidicola subsp. Acyrthosiphon pisum (strain APS) (Acyrthosiphon pisum symbiotic bacterium)).